The following is a 204-amino-acid chain: Large ribosomal subunit protein uL4 (204 aa).

The segment at 53–73 is disordered; it reads AFVSGGGKKPWRQKGRGGARA.

The protein belongs to the universal ribosomal protein uL4 family. Part of the 50S ribosomal subunit.

One of the primary rRNA binding proteins, this protein initially binds near the 5'-end of the 23S rRNA. It is important during the early stages of 50S assembly. It makes multiple contacts with different domains of the 23S rRNA in the assembled 50S subunit and ribosome. Its function is as follows. Forms part of the polypeptide exit tunnel. In Campylobacter concisus (strain 13826), this protein is Large ribosomal subunit protein uL4.